Consider the following 207-residue polypeptide: Ras-related protein Rab-8B (207 aa).

GTP is bound by residues S17, G18, V19, G20, K21, T22, C23, T35, S39, and T40. T22 provides a ligand contact to Mg(2+). Short sequence motifs (switch) lie at residues 31-45 (DAFN…GIDF) and 63-80 (DTAG…YYRG). The Mg(2+) site is built by T40 and D63. G66 is a binding site for GTP. Position 72 is a phosphothreonine; by LRRK2 (T72). The GTP site is built by N121, K122, D124, A152, and K153. Residues S180 and S183 each carry the phosphoserine modification. Residue C204 is modified to Cysteine methyl ester. Residue C204 is the site of S-geranylgeranyl cysteine attachment. The propeptide at 205–207 (SLL) is removed in mature form.

It belongs to the small GTPase superfamily. Rab family. As to quaternary structure, associated with actin, delta-catenin and alpha and beta tubulins. Interacts with OTOF. Interacts with PEX5R. Interacts with RAB3IP. Interacts with VIM. Interacts with CDH1. Interacts with MICALL2. Interacts with GDI1, GDI2, CHML and CHM; phosphorylation at Thr-72 disrupts these interactions. Interacts with MICAL1. Mg(2+) is required as a cofactor. In terms of processing, phosphorylation of Thr-72 in the switch II region by LRRK2 prevents the association of RAB regulatory proteins, including CHM, CHML and RAB GDP dissociation inhibitors GDI1 and GDI2.

Its subcellular location is the cell membrane. It is found in the cytoplasmic vesicle. The protein localises to the phagosome membrane. The protein resides in the endosome membrane. The catalysed reaction is GTP + H2O = GDP + phosphate + H(+). With respect to regulation, regulated by guanine nucleotide exchange factors (GEFs) including RAB3IP/RABIN8 which promotes the exchange of bound GDP for free GTP. Regulated by GTPase activating proteins (GAPs) which increase the GTP hydrolysis activity. Inhibited by GDP dissociation inhibitors (GDIs). The small GTPases Rab are key regulators of intracellular membrane trafficking, from the formation of transport vesicles to their fusion with membranes. Rabs cycle between an inactive GDP-bound form and an active GTP-bound form that is able to recruit to membranes different sets of downstream effectors directly responsible for vesicle formation, movement, tethering and fusion. RAB8B may be involved in polarized vesicular trafficking and neurotransmitter release. May participate in cell junction dynamics in Sertoli cells. May also participate in the export of a subset of neosynthesized proteins through a Rab8-Rab10-Rab11-dependent endososomal export route. In Mus musculus (Mouse), this protein is Ras-related protein Rab-8B.